The primary structure comprises 409 residues: Probable aspartate/prephenate aminotransferase (409 aa).

3 residues coordinate L-aspartate: glycine 39, tryptophan 125, and asparagine 175. The residue at position 239 (lysine 239) is an N6-(pyridoxal phosphate)lysine. Arginine 375 contacts L-aspartate.

It belongs to the class-I pyridoxal-phosphate-dependent aminotransferase family. Homodimer. Requires pyridoxal 5'-phosphate as cofactor.

Its subcellular location is the cytoplasm. It catalyses the reaction L-aspartate + 2-oxoglutarate = oxaloacetate + L-glutamate. The catalysed reaction is L-arogenate + 2-oxoglutarate = prephenate + L-glutamate. Catalyzes the reversible conversion of aspartate and 2-oxoglutarate to glutamate and oxaloacetate. Can also transaminate prephenate in the presence of glutamate. This chain is Probable aspartate/prephenate aminotransferase (aatA), found in Rickettsia felis (strain ATCC VR-1525 / URRWXCal2) (Rickettsia azadi).